The chain runs to 290 residues: TIMELESS-interacting protein (290 aa).

Residues M1–T59 form a disordered region. An interaction with TIMELESS region spans residues L67–I143. Phosphoserine is present on residues S194 and S222. A compositionally biased stretch (polar residues) spans N221–G242. The interval N221 to F290 is disordered. 2 positions are modified to phosphothreonine: T233 and T244.

This sequence belongs to the CSM3 family. In terms of assembly, interacts with TIMELESS (via N-terminus), which impairs TIMELESS self-association. Associates with the MCM2-7 complex. Interacts with RPA2, PRDX2.

It is found in the cytoplasm. The protein localises to the nucleus. In terms of biological role, plays an important role in the control of DNA replication and the maintenance of replication fork stability. Important for cell survival after DNA damage or replication stress. May be specifically required for the ATR-CHEK1 pathway in the replication checkpoint induced by hydroxyurea or ultraviolet light. Forms a complex with TIMELESS and this complex regulates DNA replication processes under both normal and stress conditions, stabilizes replication forks and influences both CHEK1 phosphorylation and the intra-S phase checkpoint in response to genotoxic stress. The sequence is that of TIMELESS-interacting protein (TIPIN) from Bos taurus (Bovine).